A 602-amino-acid chain; its full sequence is Elongation factor 4 (602 aa).

Residues 7 to 189 (RNIRNFSIIA…AIVQRIPAPQ (183 aa)) form the tr-type G domain. GTP-binding positions include 19–24 (DHGKST) and 136–139 (NKID).

This sequence belongs to the TRAFAC class translation factor GTPase superfamily. Classic translation factor GTPase family. LepA subfamily.

The protein resides in the cell inner membrane. The catalysed reaction is GTP + H2O = GDP + phosphate + H(+). Its function is as follows. Required for accurate and efficient protein synthesis under certain stress conditions. May act as a fidelity factor of the translation reaction, by catalyzing a one-codon backward translocation of tRNAs on improperly translocated ribosomes. Back-translocation proceeds from a post-translocation (POST) complex to a pre-translocation (PRE) complex, thus giving elongation factor G a second chance to translocate the tRNAs correctly. Binds to ribosomes in a GTP-dependent manner. The protein is Elongation factor 4 of Xylella fastidiosa (strain M23).